We begin with the raw amino-acid sequence, 275 residues long: Uroplakin-3b (275 aa).

An N-terminal signal peptide occupies residues 1 to 26; it reads MVRTRWQPPLRALLLLVLVWLPQSLS. The Lumenal segment spans residues 27–196; it reads LDLIAYVPQI…DTWPGRRSGC (170 aa). Asn-77 is a glycosylation site (N-linked (GlcNAc...) asparagine). A helical membrane pass occupies residues 197–217; the sequence is MIVITSILSALAGLLLLAFLA. Residues 218–275 lie on the Cytoplasmic side of the membrane; it reads ASTTRFSSLWWPEEAPEQLRIGSFMGKRYMTHHIPPSEAATLPVGCEPGLDPLPSLSP.

Belongs to the uroplakin-3 family. In terms of assembly, heterodimer with uroplakin-1B (UPK1B). In terms of tissue distribution, expression is urothelium-specific.

The protein localises to the cell membrane. Its function is as follows. Component of the asymmetric unit membrane (AUM); a highly specialized biomembrane elaborated by terminally differentiated urothelial cells. May play an important role in AUM-cytoskeleton interaction in terminally differentiated urothelial cells. It also contributes to the formation of urothelial glycocalyx which may play an important role in preventing bacterial adherence. The protein is Uroplakin-3b (Upk3b) of Mus musculus (Mouse).